The chain runs to 98 residues: Cystatin-B (98 aa).

An N-acetylmethionine modification is found at methionine 1. The Secondary area of contact motif lies at 46–50 (QLVAG).

The protein belongs to the cystatin family. As to quaternary structure, able to form dimers stabilized by noncovalent forces.

It is found in the cytoplasm. Its function is as follows. This is an intracellular thiol proteinase inhibitor. The polypeptide is Cystatin-B (CSTB) (Bos taurus (Bovine)).